An 862-amino-acid chain; its full sequence is Transcription factor E2F7 (862 aa).

2 consecutive DNA-binding regions follow at residues 140–209 (RKQK…CWHG) and 279–364 (RKDK…KWIG). 3 disordered regions span residues 561-592 (PGSDSPTLEETTMSKQERPTKRQLNDKDDAPL), 617-643 (TPEQLQHVSREEEYNTEPVTKHSNVGE), and 788-862 (KADS…SAGN). A compositionally biased stretch (polar residues) spans 564 to 574 (DSPTLEETTMS). The segment covering 575-590 (KQERPTKRQLNDKDDA) has biased composition (basic and acidic residues). Composition is skewed to polar residues over residues 633-643 (EPVTKHSNVGE) and 832-851 (DVSSSRKPQRTQTRTSSSAQ).

It belongs to the E2F/DP family. As to quaternary structure, homodimer and heterodimer: mainly forms homodimers and, to a lesser extent, heterodimers with e2f8.

The protein localises to the nucleus. Atypical E2F transcription factor that participates in various processes such as angiogenesis and polyploidization of specialized cells. Mainly acts as a transcription repressor that binds DNA independently of DP proteins and specifically recognizes the E2 recognition site 5'-TTTC[CG]CGC-3'. Directly represses transcription of classical E2F transcription factors such as e2f1. Acts as a regulator of S-phase by recognizing and binding the E2-related site 5'-TTCCCGCC-3' and mediating repression of G1/S-regulated genes. Acts as a promoter of sprouting angiogenesis, possibly by acting as a transcription activator. This Xenopus tropicalis (Western clawed frog) protein is Transcription factor E2F7 (e2f7).